Consider the following 227-residue polypeptide: 2,3-bisphosphoglycerate-dependent phosphoglycerate mutase (227 aa).

Residues 7–14, 20–21, R59, 86–89, K97, 113–114, and 182–183 contribute to the substrate site; these read RHGQSEWN, TG, ERHY, RR, and GN. Residue H8 is the Tele-phosphohistidine intermediate of the active site. The active-site Proton donor/acceptor is the E86.

It belongs to the phosphoglycerate mutase family. BPG-dependent PGAM subfamily. In terms of assembly, homodimer.

It catalyses the reaction (2R)-2-phosphoglycerate = (2R)-3-phosphoglycerate. It participates in carbohydrate degradation; glycolysis; pyruvate from D-glyceraldehyde 3-phosphate: step 3/5. Its function is as follows. Catalyzes the interconversion of 2-phosphoglycerate and 3-phosphoglycerate. In Neisseria gonorrhoeae (strain ATCC 700825 / FA 1090), this protein is 2,3-bisphosphoglycerate-dependent phosphoglycerate mutase.